Here is a 263-residue protein sequence, read N- to C-terminus: Lysine 5,6-aminomutase beta subunit (263 aa).

Residues 120 to 259 form the B12-binding domain; sequence EVVMVGASTG…TFILKEMVQR (140 aa). Adenosylcob(III)alamin is bound by residues 130–136 and histidine 133; that span reads TDAHTVG. Residue lysine 144 is modified to N6-(pyridoxal phosphate)lysine. Residues 185–192, 219–223, and 239–244 each bind adenosylcob(III)alamin; these read LVSQTVTQ, IAGGA, and FGPGKY.

Belongs to the KamE family. Heterotetramer of 2 alpha and 2 beta subunits. It depends on adenosylcob(III)alamin as a cofactor. The cofactor is pyridoxal 5'-phosphate.

It carries out the reaction (3S)-3,6-diaminohexanoate = (3S,5S)-3,5-diaminohexanoate. The enzyme catalyses D-lysine = (2R,5S)-2,5-diaminohexanoate. The protein operates within amino-acid degradation; L-lysine degradation via acetate pathway. Its function is as follows. Catalyzes the migration of the L-beta-lysine and D-lysine epsilon amino group to the delta carbon to produce 3,5-diaminohexanoate and 2,5-diaminohexanoate, respectively. This chain is Lysine 5,6-aminomutase beta subunit, found in Fusobacterium nucleatum subsp. nucleatum (strain ATCC 25586 / DSM 15643 / BCRC 10681 / CIP 101130 / JCM 8532 / KCTC 2640 / LMG 13131 / VPI 4355).